The sequence spans 193 residues: ATP-dependent Clp protease proteolytic subunit (193 aa).

Residue Ser98 is the Nucleophile of the active site. His123 is an active-site residue.

Belongs to the peptidase S14 family. As to quaternary structure, fourteen ClpP subunits assemble into 2 heptameric rings which stack back to back to give a disk-like structure with a central cavity, resembling the structure of eukaryotic proteasomes.

Its subcellular location is the cytoplasm. It catalyses the reaction Hydrolysis of proteins to small peptides in the presence of ATP and magnesium. alpha-casein is the usual test substrate. In the absence of ATP, only oligopeptides shorter than five residues are hydrolyzed (such as succinyl-Leu-Tyr-|-NHMec, and Leu-Tyr-Leu-|-Tyr-Trp, in which cleavage of the -Tyr-|-Leu- and -Tyr-|-Trp bonds also occurs).. Its function is as follows. Cleaves peptides in various proteins in a process that requires ATP hydrolysis. Has a chymotrypsin-like activity. Plays a major role in the degradation of misfolded proteins. The protein is ATP-dependent Clp protease proteolytic subunit of Haemophilus influenzae (strain 86-028NP).